The primary structure comprises 413 residues: Gamma-lactamase FDB1 (413 aa).

Positions 126, 128, 130, 131, 211, 235, and 323 each coordinate Zn(2+).

It belongs to the metallo-beta-lactamase superfamily.

It functions in the pathway xenobiotic degradation. Gamma-lactamase; part of the Fusarium detoxification of benzoxazolinone cluster involved in the degradation of benzoxazolinones produced by the host plant. Maize, wheat, and rye produce the 2 benzoxazinone phytoanticipins 2,4-dihy-droxy-7-methoxy-1,4-benzoxazin-3-one (DIMBOA) and 2,4-dihydroxy-1,4-benzoxazin-3-one (DIBOA) that, due to their inherent instability once released, spontaneously degrade to the more stable corresponding benzoxazolinones, 6-methoxy-2-benzoxazolinone (MBOA) and 2-benzoxazolinone (BOA), respectively. The first step in the detoxification of benzoxazolinones involves the hydrolysis of the cyclic ester bond of benzoxazolinones by the gamma-lactamase FDB1 to aminophenols. FDB1 is able to convert BOA into 2-aminophenol (2-AP), as well as MBOA into 5-methoxy-2-aminophenol (2-AMP). The N-malonyltransferase FDB2 then metabolizes aminophenols via N-malonylation to non-toxic malonamic acids. FDB2 converts 2-AP into N-(2-hydroxyphenyl) malonamic acid (HPMA) and 2-AMP into N-(2-hydroxy-4-methoxyphenyl) malonamic acid (HMPMA). The cluster also contains 2 transcription factors (FDB3 and FPSE_08121), an aldo-keto reductase (FPSE_08125) that possibly associates with a ketone component of BOA and MBOA degradation, an esterase (FPSE_08126), an acyl-CoA transferase (FPSE_08120), a solute carrier protein (FPSE_08119) and a transmembrane transporter (FPSE_08127) proposed to shuttle metabolites of benzoxazolinone degradation. The sequence is that of Gamma-lactamase FDB1 from Fusarium pseudograminearum (strain CS3096) (Wheat and barley crown-rot fungus).